A 153-amino-acid polypeptide reads, in one-letter code: MSKHSLIENLKKQIEPIAEGLDYELYHIEFVKEGKENYLRIYIDSENGVSLEGCEKVSRAVSELLDDIDPIQESYYLEVSSPGIDRVLYTDKHLQKYKGYNIVLNLYSPIDKKKKYEGELVDFNENEINIKVEENIVTIPREKISKTTLKGEL.

This sequence belongs to the RimP family.

It localises to the cytoplasm. Functionally, required for maturation of 30S ribosomal subunits. In Clostridium botulinum (strain Okra / Type B1), this protein is Ribosome maturation factor RimP.